The sequence spans 106 residues: Cell division topological specificity factor (106 aa).

The protein belongs to the MinE family.

Its function is as follows. Prevents the cell division inhibition by proteins MinC and MinD at internal division sites while permitting inhibition at polar sites. This ensures cell division at the proper site by restricting the formation of a division septum at the midpoint of the long axis of the cell. This chain is Cell division topological specificity factor, found in Prochlorococcus marinus subsp. pastoris (strain CCMP1986 / NIES-2087 / MED4).